Consider the following 127-residue polypeptide: Spore germination protein 1 (127 aa).

Positions 1–25 (MNIKNSLILIISTIFVLSMINGGLT) are cleaved as a signal peptide. 2 N-linked (GlcNAc...) asparagine glycosylation sites follow: Asn54 and Asn118.

The protein belongs to the Dictyostelium gerABC family.

The protein resides in the secreted. The protein is Spore germination protein 1 (gerA) of Dictyostelium discoideum (Social amoeba).